The sequence spans 166 residues: Large ribosomal subunit protein uL10 (166 aa).

It belongs to the universal ribosomal protein uL10 family. Part of the ribosomal stalk of the 50S ribosomal subunit. The N-terminus interacts with L11 and the large rRNA to form the base of the stalk. The C-terminus forms an elongated spine to which L12 dimers bind in a sequential fashion forming a multimeric L10(L12)X complex.

Its function is as follows. Forms part of the ribosomal stalk, playing a central role in the interaction of the ribosome with GTP-bound translation factors. The chain is Large ribosomal subunit protein uL10 from Streptococcus equi subsp. zooepidemicus (strain MGCS10565).